An 82-amino-acid polypeptide reads, in one-letter code: Small ribosomal subunit protein bS16 (82 aa).

Belongs to the bacterial ribosomal protein bS16 family.

This is Small ribosomal subunit protein bS16 from Clostridium botulinum (strain ATCC 19397 / Type A).